We begin with the raw amino-acid sequence, 65 residues long: Probable movement protein p8 (65 aa).

Over residues 1 to 10 (MENTENVRSG) the composition is skewed to polar residues. A disordered region spans residues 1 to 47 (MENTENVRSGRNQREYSKERQQEGGYKEVSKAAVRKEGDVKQDMGPS). Residues 12–42 (NQREYSKERQQEGGYKEVSKAAVRKEGDVKQ) show a composition bias toward basic and acidic residues.

It belongs to the carmovirus/necrovirus/panicovirus movement protein p8 family.

In terms of biological role, cell-to-cell movement. This Tobacco necrosis virus (strain D) (TNV-D) protein is Probable movement protein p8.